A 548-amino-acid polypeptide reads, in one-letter code: Natural resistance-associated macrophage protein 1 (548 aa).

The span at 1 to 12 (MSGDTGTPNQGG) shows a compositional bias: polar residues. The interval 1-38 (MSGDTGTPNQGGTRYGSISSPPSPGPQQAPPGGTYLSE) is disordered. The Cytoplasmic segment spans residues 1 to 55 (MSGDTGTPNQGGTRYGSISSPPSPGPQQAPPGGTYLSEKIPIPDTESGAFSLRKL). The chain crosses the membrane as a helical span at residues 56-73 (WAFTGPGFLMSIAFLDPG). The Extracellular segment spans residues 74 to 82 (NIESDLQAG). Residues 83-102 (AVAGFKLLWVLLWATVLGLL) traverse the membrane as a helical segment. Residues 103–139 (CQRLAARLGVVTGKDLGEVCHLYYPKVPRTLLWLTIE) lie on the Cytoplasmic side of the membrane. A helical membrane pass occupies residues 140-160 (LAIVGSDMQEVIGTAIAFSLL). Residues 161–164 (SAGR) are Extracellular-facing. A helical membrane pass occupies residues 165-184 (IPLWGGVLITIVDTFFFLFL). Residues 185–193 (DNYGLRKLE) are Cytoplasmic-facing. Residues 194-214 (AFFGFLITIMALTFGYEYVVA) form a helical membrane-spanning segment. Residues 215–237 (RPAQGALLQGLFLPSCPGCGQPE) are Extracellular-facing. Residues 238 to 256 (LLQAVGIVGAIIMPHNIYL) form a helical membrane-spanning segment. Residues 257–284 (HSSLVKSREVDRSRRADIREANMYFLIE) are Cytoplasmic-facing. Residues 285–304 (ATIALSVSFFINLFVMAVFG) form a helical membrane-spanning segment. Residues 305 to 346 (QAFYKQTNQAAFNICANSSLHDYATIFPRDNLTVAVDIYQGG) lie on the Extracellular side of the membrane. 2 N-linked (GlcNAc...) asparagine glycosylation sites follow: Asn321 and Asn335. The chain crosses the membrane as a helical span at residues 347 to 366 (VILGCLFGPAALYIWAVGLL). Residues 367–397 (AAGQSSTMTGTYAGQFVMEGFLKLRWSRFAR) are Cytoplasmic-facing. Residues 398 to 415 (VLLTRSCAIPPTVLLAVF) form a helical membrane-spanning segment. Residues 416 to 426 (RDLQDLSGLND) lie on the Extracellular side of the membrane. A helical transmembrane segment spans residues 427-447 (LLNVLQSLLLPFAVLPILTFT). Topologically, residues 448–463 (SMPALMQEFANGLVSK) are cytoplasmic. Residues 464-485 (IITSSIMVLVCAVNLYFVISYV) traverse the membrane as a helical segment. Topologically, residues 486-493 (PSLPHPAY) are extracellular. A helical membrane pass occupies residues 494 to 513 (FSLVALLAAAYLGLTTYLVW). The Cytoplasmic segment spans residues 514 to 548 (TCLITQGATRLAHSSHQRFLYGLPGEDQEEGRTSG).

The protein belongs to the NRAMP family.

The protein localises to the late endosome membrane. It localises to the lysosome membrane. The catalysed reaction is Zn(2+)(in) + H(+)(out) = Zn(2+)(out) + H(+)(in). It catalyses the reaction Fe(2+)(in) + H(+)(out) = Fe(2+)(out) + H(+)(in). The enzyme catalyses Mn(2+)(in) + H(+)(out) = Mn(2+)(out) + H(+)(in). Macrophage-specific antiporter that fluxes metal ions in either direction against a proton gradient. Localized to late endosomal lysosomal membranes, delivers bivalent cations from the cytosol into these acidic compartments where they may directly affect antimicrobial activity. Involved in iron metabolism and host natural resistance to infection with intracellular parasites. Pathogen resistance involves sequestration of Fe(2+) and Mn(2+), cofactors of both prokaryotic and eukaryotic catalases and superoxide dismutases, not only to protect the macrophage against its own generation of reactive oxygen species, but to deny the cations to the pathogen for synthesis of its protective enzymes. The polypeptide is Natural resistance-associated macrophage protein 1 (SLC11A1) (Ovis aries (Sheep)).